The sequence spans 328 residues: Ribosomal RNA large subunit methyltransferase F (328 aa).

A disordered region spans residues 1–31 (MTDTRKPPRKKPQRPAKPAAPREKATLHPRN).

It belongs to the methyltransferase superfamily. METTL16/RlmF family.

The protein localises to the cytoplasm. The enzyme catalyses adenosine(1618) in 23S rRNA + S-adenosyl-L-methionine = N(6)-methyladenosine(1618) in 23S rRNA + S-adenosyl-L-homocysteine + H(+). Functionally, specifically methylates the adenine in position 1618 of 23S rRNA. This chain is Ribosomal RNA large subunit methyltransferase F, found in Pseudomonas savastanoi pv. phaseolicola (strain 1448A / Race 6) (Pseudomonas syringae pv. phaseolicola (strain 1448A / Race 6)).